A 61-amino-acid polypeptide reads, in one-letter code: Small ribosomal subunit protein uS14 (61 aa).

Residues cysteine 24, cysteine 27, cysteine 40, and cysteine 43 each coordinate Zn(2+).

It belongs to the universal ribosomal protein uS14 family. Zinc-binding uS14 subfamily. As to quaternary structure, part of the 30S ribosomal subunit. Contacts proteins S3 and S10. Requires Zn(2+) as cofactor.

In terms of biological role, binds 16S rRNA, required for the assembly of 30S particles and may also be responsible for determining the conformation of the 16S rRNA at the A site. This Halalkalibacterium halodurans (strain ATCC BAA-125 / DSM 18197 / FERM 7344 / JCM 9153 / C-125) (Bacillus halodurans) protein is Small ribosomal subunit protein uS14.